The primary structure comprises 579 residues: Fatty-acid amide hydrolase 1 (579 aa).

The helical transmembrane segment at 9–29 (ALPGASGVALACCFVAAAVAL) threads the bilayer. The Cytoplasmic segment spans residues 30-403 (RWSGRRTARG…GDFVDPCLGD (374 aa)). Lys142 (charge relay system) is an active-site residue. Substrate contacts are provided by residues Met191, Ser217, and 238–241 (IGGS). Ser217 (charge relay system) is an active-site residue. Ser241 functions as the Acyl-ester intermediate in the catalytic mechanism. Ser241 carries the post-translational modification Phosphoserine. Residues 404–433 (LVSILKLPQWLKGLLAFLVKPLLPRLSAFL) lie within the membrane without spanning it. The Cytoplasmic portion of the chain corresponds to 434 to 579 (SNMKSRSAGK…RLMTPEKQSS (146 aa)).

It belongs to the amidase family. Homodimer. In terms of tissue distribution, highly expressed in the brain, small intestine, pancreas, skeletal muscle and testis. Also expressed in the kidney, liver, lung, placenta and prostate.

The protein resides in the endomembrane system. Its subcellular location is the cytoplasm. It is found in the cytoskeleton. The catalysed reaction is N-(5Z,8Z,11Z,14Z-eicosatetraenoyl)-ethanolamine + H2O = ethanolamine + (5Z,8Z,11Z,14Z)-eicosatetraenoate. It catalyses the reaction (9Z)-octadecenamide + H2O = (9Z)-octadecenoate + NH4(+). The enzyme catalyses 2-(5Z,8Z,11Z,14Z-eicosatetraenoyl)-glycerol + H2O = glycerol + (5Z,8Z,11Z,14Z)-eicosatetraenoate + H(+). It carries out the reaction N-(9Z-octadecenoyl) ethanolamine + H2O = ethanolamine + (9Z)-octadecenoate. The catalysed reaction is N-hexadecanoylethanolamine + H2O = ethanolamine + hexadecanoate. It catalyses the reaction hexadecanamide + H2O = hexadecanoate + NH4(+). The enzyme catalyses tetradecamide + H2O = tetradecanoate + NH4(+). It carries out the reaction N-(9Z-octadecenoyl)-taurine + H2O = taurine + (9Z)-octadecenoate. The catalysed reaction is (9Z,12Z,15Z)-octadecatrienamide + H2O = (9Z,12Z,15Z)-octadecatrienoate + NH4(+). It catalyses the reaction (5Z,8Z,11Z,14Z)-eicosatetraenamide + H2O = (5Z,8Z,11Z,14Z)-eicosatetraenoate + NH4(+). The enzyme catalyses (6Z)-octadecenamide + H2O = (6Z)-octadecenoate + NH4(+). It carries out the reaction (15Z)-tetracosenamide + H2O = (15Z)-tetracosenoate + NH4(+). The catalysed reaction is (8Z,11Z,14Z)-eicosatrienamide + H2O = (8Z,11Z,14Z)-eicosatrienoate + NH4(+). It catalyses the reaction (11Z,14Z,17Z)-eicosatrienamide + H2O = (11Z,14Z,17Z)-eicosatrienoate + NH4(+). The enzyme catalyses (11Z,14Z)-eicosadienamide + H2O = (11Z,14Z)-eicosadienoate + NH4(+). It carries out the reaction (9Z,12Z)-octadecadienamide + H2O = (9Z,12Z)-octadecadienoate + NH4(+). The catalysed reaction is 1-O-methyl-(5Z,8Z,11Z,14Z)-eicosatetraenoate + H2O = methanol + (5Z,8Z,11Z,14Z)-eicosatetraenoate + H(+). It catalyses the reaction (11Z)-eicosenamide + H2O = (11Z)-eicosenoate + NH4(+). The enzyme catalyses N-(9Z-hexadecenoyl) ethanolamine + H2O = (9Z)-hexadecenoate + ethanolamine. It carries out the reaction N-octadecanoyl ethanolamine + H2O = octadecanoate + ethanolamine. The catalysed reaction is N-docosanoyl-ethanolamine + H2O = docosanoate + ethanolamine. It catalyses the reaction N-tetracosanoyl-taurine + H2O = tetracosanoate + taurine. The enzyme catalyses N-(15Z-tetracosenoyl)-ethanolamine + H2O = (15Z)-tetracosenoate + ethanolamine. It carries out the reaction N-docosanoyl-taurine + H2O = docosanoate + taurine. The catalysed reaction is N-(15Z-tetracosenoyl)-taurine + H2O = (15Z)-tetracosenoate + taurine. It catalyses the reaction N-tricosanoyl-taurine + H2O = tricosanoate + taurine. The enzyme catalyses (9Z)-octadecenoate + glycine = N-(9Z-octadecenoyl)glycine + H2O. It carries out the reaction N-(5Z,8Z,11Z,14Z)-eicosatetraenoyl-glycine + H2O = (5Z,8Z,11Z,14Z)-eicosatetraenoate + glycine. The catalysed reaction is N-(5Z,8Z,11Z,14Z-eicosatetraenoyl)-L-serine + H2O = (5Z,8Z,11Z,14Z)-eicosatetraenoate + L-serine. With respect to regulation, inhibited by O-aryl carbamates and alpha-keto heterocycles. Inhibited by trifluoromethyl ketone. Its function is as follows. Catalyzes the hydrolysis of endogenous amidated lipids like the sleep-inducing lipid oleamide ((9Z)-octadecenamide), the endocannabinoid anandamide (N-(5Z,8Z,11Z,14Z-eicosatetraenoyl)-ethanolamine), as well as other fatty amides, to their corresponding fatty acids, thereby regulating the signaling functions of these molecules. Hydrolyzes polyunsaturated substrate anandamide preferentially as compared to monounsaturated substrates. It can also catalyze the hydrolysis of the endocannabinoid 2-arachidonoylglycerol (2-(5Z,8Z,11Z,14Z-eicosatetraenoyl)-glycerol). FAAH cooperates with PM20D1 in the hydrolysis of amino acid-conjugated fatty acids such as N-fatty acyl glycine and N-fatty acyl-L-serine, thereby acting as a physiological regulator of specific subsets of intracellular, but not of extracellular, N-fatty acyl amino acids. This is Fatty-acid amide hydrolase 1 (FAAH) from Homo sapiens (Human).